The following is a 366-amino-acid chain: Peptide chain release factor 2 (366 aa).

Gln-249 carries the post-translational modification N5-methylglutamine.

The protein belongs to the prokaryotic/mitochondrial release factor family. In terms of processing, methylated by PrmC. Methylation increases the termination efficiency of RF2.

It is found in the cytoplasm. In terms of biological role, peptide chain release factor 2 directs the termination of translation in response to the peptide chain termination codons UGA and UAA. The chain is Peptide chain release factor 2 from Petrotoga mobilis (strain DSM 10674 / SJ95).